The chain runs to 318 residues: uncharacterized protein (318 aa).

A run of 2 helical transmembrane segments spans residues 230 to 250 (VWTY…SFLI) and 264 to 284 (ASLM…LGVI).

The protein belongs to the glycosyltransferase 2 family. GtrB subfamily.

It is found in the cell membrane. This is an uncharacterized protein from Synechocystis sp. (strain ATCC 27184 / PCC 6803 / Kazusa).